A 261-amino-acid chain; its full sequence is U1 small nuclear ribonucleoprotein 70 kDa homolog (261 aa).

Residues K100–G178 enclose the RRM domain. The disordered stretch occupies residues G192–N261. The span at Y198–S215 shows a compositional bias: basic and acidic residues. Residues G216 to F235 show a composition bias toward gly residues.

As to quaternary structure, component of the spliceosome, where it is associated with snRNP U1. Associates with U1 snRNA.

It is found in the nucleus. Functionally, involved in nuclear mRNA splicing. Essential for growth. The sequence is that of U1 small nuclear ribonucleoprotein 70 kDa homolog from Schizosaccharomyces pombe (strain 972 / ATCC 24843) (Fission yeast).